The chain runs to 284 residues: RNase adapter protein RapZ (284 aa).

Position 8–15 (8–15 (GRSGSGKS)) interacts with ATP. 56–59 (DVRN) lines the GTP pocket. The tract at residues 266 to 284 (RSRGKNVQSRHRTLEKRKT) is RNA-binding.

The protein belongs to the RapZ-like family. RapZ subfamily. As to quaternary structure, homotrimer.

Modulates the synthesis of GlmS, by affecting the processing and stability of the regulatory small RNA GlmZ. When glucosamine-6-phosphate (GlcN6P) concentrations are high in the cell, RapZ binds GlmZ and targets it to cleavage by RNase E. Consequently, GlmZ is inactivated and unable to activate GlmS synthesis. Under low GlcN6P concentrations, RapZ is sequestered and inactivated by an other regulatory small RNA, GlmY, preventing GlmZ degradation and leading to synthesis of GlmS. In Salmonella typhimurium (strain LT2 / SGSC1412 / ATCC 700720), this protein is RNase adapter protein RapZ.